The primary structure comprises 426 residues: Enolase (426 aa).

Gln165 lines the (2R)-2-phosphoglycerate pocket. Glu207 serves as the catalytic Proton donor. Mg(2+) contacts are provided by Asp244, Glu285, and Asp312. Residues Lys337, Arg366, Ser367, and Lys388 each contribute to the (2R)-2-phosphoglycerate site. Catalysis depends on Lys337, which acts as the Proton acceptor.

It belongs to the enolase family. Mg(2+) is required as a cofactor.

The protein resides in the cytoplasm. It is found in the secreted. The protein localises to the cell surface. It carries out the reaction (2R)-2-phosphoglycerate = phosphoenolpyruvate + H2O. Its pathway is carbohydrate degradation; glycolysis; pyruvate from D-glyceraldehyde 3-phosphate: step 4/5. Functionally, catalyzes the reversible conversion of 2-phosphoglycerate (2-PG) into phosphoenolpyruvate (PEP). It is essential for the degradation of carbohydrates via glycolysis. This chain is Enolase, found in Cyanothece sp. (strain PCC 7425 / ATCC 29141).